The chain runs to 211 residues: Thiamine-phosphate synthase (211 aa).

Residues 37-41 (QYRDK) and N69 contribute to the 4-amino-2-methyl-5-(diphosphooxymethyl)pyrimidine site. Mg(2+) is bound by residues D70 and D89. S108 is a 4-amino-2-methyl-5-(diphosphooxymethyl)pyrimidine binding site. 135–137 (SPT) serves as a coordination point for 2-[(2R,5Z)-2-carboxy-4-methylthiazol-5(2H)-ylidene]ethyl phosphate. K138 serves as a coordination point for 4-amino-2-methyl-5-(diphosphooxymethyl)pyrimidine. 2-[(2R,5Z)-2-carboxy-4-methylthiazol-5(2H)-ylidene]ethyl phosphate contacts are provided by residues G165 and 185–186 (LS).

The protein belongs to the thiamine-phosphate synthase family. The cofactor is Mg(2+).

The catalysed reaction is 2-[(2R,5Z)-2-carboxy-4-methylthiazol-5(2H)-ylidene]ethyl phosphate + 4-amino-2-methyl-5-(diphosphooxymethyl)pyrimidine + 2 H(+) = thiamine phosphate + CO2 + diphosphate. It catalyses the reaction 2-(2-carboxy-4-methylthiazol-5-yl)ethyl phosphate + 4-amino-2-methyl-5-(diphosphooxymethyl)pyrimidine + 2 H(+) = thiamine phosphate + CO2 + diphosphate. The enzyme catalyses 4-methyl-5-(2-phosphooxyethyl)-thiazole + 4-amino-2-methyl-5-(diphosphooxymethyl)pyrimidine + H(+) = thiamine phosphate + diphosphate. Its pathway is cofactor biosynthesis; thiamine diphosphate biosynthesis; thiamine phosphate from 4-amino-2-methyl-5-diphosphomethylpyrimidine and 4-methyl-5-(2-phosphoethyl)-thiazole: step 1/1. In terms of biological role, condenses 4-methyl-5-(beta-hydroxyethyl)thiazole monophosphate (THZ-P) and 2-methyl-4-amino-5-hydroxymethyl pyrimidine pyrophosphate (HMP-PP) to form thiamine monophosphate (TMP). The polypeptide is Thiamine-phosphate synthase (Thiobacillus denitrificans (strain ATCC 25259 / T1)).